Here is a 353-residue protein sequence, read N- to C-terminus: Fe(3+) ions import ATP-binding protein FbpC (353 aa).

The region spanning Val-9–Met-239 is the ABC transporter domain. Residue Gly-41–Thr-48 coordinates ATP.

Belongs to the ABC transporter superfamily. Fe(3+) ion importer (TC 3.A.1.10) family. As to quaternary structure, the complex is composed of two ATP-binding proteins (FbpC), two transmembrane proteins (FbpB) and a solute-binding protein (FbpA).

It localises to the cell inner membrane. The enzyme catalyses Fe(3+)(out) + ATP + H2O = Fe(3+)(in) + ADP + phosphate + H(+). Functionally, part of the ABC transporter complex FbpABC involved in Fe(3+) ions import. Responsible for energy coupling to the transport system. This chain is Fe(3+) ions import ATP-binding protein FbpC, found in Brucella melitensis biotype 1 (strain ATCC 23456 / CCUG 17765 / NCTC 10094 / 16M).